The following is a 49-amino-acid chain: MSRVYIYPLTVFYFFAIEMSVFCYYNWFYRRNFPYLFRPIFPFLIVLIS.

Residues 6–28 form a helical membrane-spanning segment; the sequence is IYPLTVFYFFAIEMSVFCYYNWF.

It is found in the membrane. This is an uncharacterized protein from Saccharomyces cerevisiae (strain ATCC 204508 / S288c) (Baker's yeast).